Consider the following 375-residue polypeptide: Actin, cytoplasmic (375 aa).

Belongs to the actin family.

It localises to the cytoplasm. Its subcellular location is the cytoskeleton. It carries out the reaction ATP + H2O = ADP + phosphate + H(+). Functionally, actins are highly conserved proteins that are involved in various types of cell motility and are ubiquitously expressed in all eukaryotic cells. The chain is Actin, cytoplasmic from Oxytricha trifallax (Sterkiella histriomuscorum).